We begin with the raw amino-acid sequence, 361 residues long: Homeobox protein knotted-1-like 6 (361 aa).

Positions 11-48 (VGASGVHGGHQHQHHHHPWGSSLSAIVAPPPPPQLQQQ) are disordered. Basic residues predominate over residues 19 to 28 (GHQHQHHHHP). The 21-residue stretch at 242 to 262 (ELKHHLLKKYSGYLSSLKQEL) folds into the ELK domain. A DNA-binding region (homeobox; TALE-type) is located at residues 263–326 (SKKKKKGKLP…NQRKRHWKPS (64 aa)).

The protein belongs to the TALE/KNOX homeobox family. As to quaternary structure, interacts with FTIP7. In terms of tissue distribution, expressed predominantly in shoot apices. Also found to a lesser extent in glumes.

It localises to the nucleus. It is found in the cytoplasm. Transcription factor that regulates genes involved in development. May be involved in shoot formation during embryogenesis. Overexpression in transgenic plants causes altered leaf morphology. Regulates anther dehiscence via direct repression of the auxin biosynthetic gene YUCCA4. Binds to the DNA sequence 5'-TGAC-3' in the promoter of the YUCCA4 gene and represses its activity during anther development. Reduction of auxin levels at late stage of anther development, after meiosis of microspore mother cells, is necessary for normal anther dehiscence and seed setting. The polypeptide is Homeobox protein knotted-1-like 6 (OSH1) (Oryza sativa subsp. japonica (Rice)).